A 655-amino-acid chain; its full sequence is Broad substrate specificity ATP-binding cassette transporter ABCG2 (655 aa).

Residues 1-395 (MSSSNVEVFI…KNLLGNPQAS (395 aa)) are Cytoplasmic-facing. The ABC transporter domain maps to 37 to 286 (LSFHNICYRV…FESAGYHCEA (250 aa)). Residues 80-87 (GPTGGGKS), 184-190 (RGVSGGE), glutamate 211, and histidine 243 contribute to the ATP site. A Phosphothreonine; by PIM1 modification is found at threonine 362. Residues 389 to 651 (LGNPQASIAQ…TIAYLKLLFL (263 aa)) enclose the ABC transmembrane type-2 domain. The helical transmembrane segment at 396-416 (IAQIIVTVVLGLVIGAIYFGL) threads the bilayer. Topologically, residues 417–428 (KNDSTGIQNRAG) are extracellular. A helical membrane pass occupies residues 429–449 (VLFFLTTNQCFSSVSAVELFV). The Cytoplasmic segment spans residues 450-477 (VEKKLFIHEYISGYYRVSSYFLGKLLSD). A helical transmembrane segment spans residues 478–498 (LLPMRMLPSIIFTCIVYFMLG). Over 499 to 506 (LKPKADAF) the chain is Extracellular. Residues 507–527 (FVMMFTLMMVAYSASSMALAI) traverse the membrane as a helical segment. Residues 528–535 (AAGQSVVS) lie on the Cytoplasmic side of the membrane. Residues 536 to 556 (VATLLMTICFVFMMIFSGLLV) form a helical membrane-spanning segment. Over 557–630 (NLTTIASWLS…LSPWGLWKNH (74 aa)) the chain is Extracellular. An intrachain disulfide couples cysteine 592 to cysteine 608. The N-linked (GlcNAc...) asparagine glycan is linked to asparagine 596. Residues 631–651 (VALACMIVIFLTIAYLKLLFL) traverse the membrane as a helical segment. Residues 652–655 (KKYS) lie on the Cytoplasmic side of the membrane.

It belongs to the ABC transporter superfamily. ABCG family. Eye pigment precursor importer (TC 3.A.1.204) subfamily. In terms of assembly, homodimer; disulfide-linked. The minimal functional unit is a homodimer, but the major oligomeric form in plasma membrane is a homotetramer with possibility of higher order oligomerization up to homododecamers. In terms of processing, N-glycosylated. Glycosylation-deficient ABCG2 is normally expressed and functional. Phosphorylated. Phosphorylation at Thr-362 by PIM1 is induced by drugs like mitoxantrone and is associated with cells increased drug resistance. It regulates the localization to the plasma membrane, the homooligomerization and therefore, the activity of the transporter. In terms of tissue distribution, highly expressed in placenta. Low expression in small intestine, liver and colon. Expressed in brain (at protein level).

The protein localises to the cell membrane. It is found in the apical cell membrane. Its subcellular location is the mitochondrion membrane. It catalyses the reaction ATP + H2O + xenobioticSide 1 = ADP + phosphate + xenobioticSide 2.. It carries out the reaction urate(in) + ATP + H2O = urate(out) + ADP + phosphate + H(+). The enzyme catalyses indoxyl sulfate(in) + ATP + H2O = indoxyl sulfate(out) + ADP + phosphate + H(+). The catalysed reaction is sphing-4-enine 1-phosphate(in) + ATP + H2O = sphing-4-enine 1-phosphate(out) + ADP + phosphate + H(+). It catalyses the reaction estrone 3-sulfate(in) + ATP + H2O = estrone 3-sulfate(out) + ADP + phosphate + H(+). It carries out the reaction dehydroepiandrosterone 3-sulfate(in) + ATP + H2O = dehydroepiandrosterone 3-sulfate(out) + ADP + phosphate + H(+). The enzyme catalyses 4-methylumbelliferone sulfate(in) + ATP + H2O = 4-methylumbelliferone sulfate(out) + ADP + phosphate + H(+). The catalysed reaction is 5,7-dimethyl-2-methylamino-4-(3-pyridylmethyl)-1,3-benzothiazol-6-yl beta-D-glucuronate(in) + ATP + H2O = 5,7-dimethyl-2-methylamino-4-(3-pyridylmethyl)-1,3-benzothiazol-6-yl beta-D-glucuronate(out) + ADP + phosphate + H(+). It catalyses the reaction 4-methylumbelliferone beta-D-glucuronate(in) + ATP + H2O = 4-methylumbelliferone beta-D-glucuronate(out) + ADP + phosphate + H(+). It carries out the reaction 5,7-dimethyl-2-methylamino-4-(3-pyridylmethyl)-1,3-benzothiazol-6-yl sulfate(in) + ATP + H2O = 5,7-dimethyl-2-methylamino-4-(3-pyridylmethyl)-1,3-benzothiazol-6-yl sulfate(out) + ADP + phosphate + H(+). The enzyme catalyses 17beta-estradiol 17-O-(beta-D-glucuronate)(in) + ATP + H2O = 17beta-estradiol 17-O-(beta-D-glucuronate)(out) + ADP + phosphate + H(+). The catalysed reaction is methotrexate(in) + ATP + H2O = methotrexate(out) + ADP + phosphate + H(+). It catalyses the reaction riboflavin(in) + ATP + H2O = riboflavin(out) + ADP + phosphate + H(+). It carries out the reaction pheophorbide a(in) + ATP + H2O = pheophorbide a(out) + ADP + phosphate + H(+). The enzyme catalyses itaconate(in) + ATP + H2O = itaconate(out) + ADP + phosphate + H(+). Specifically inhibited by the fungal toxin fumitremorgin C and Ko143. Its function is as follows. Broad substrate specificity ATP-dependent transporter of the ATP-binding cassette (ABC) family that actively extrudes a wide variety of physiological compounds, dietary toxins and xenobiotics from cells. Involved in porphyrin homeostasis, mediating the export of protoporphyrin IX (PPIX) from both mitochondria to cytosol and cytosol to extracellular space, it also functions in the cellular export of heme. Also mediates the efflux of sphingosine-1-P from cells. Acts as a urate exporter functioning in both renal and extrarenal urate excretion. In kidney, it also functions as a physiological exporter of the uremic toxin indoxyl sulfate. Also involved in the excretion of steroids like estrone 3-sulfate/E1S, 3beta-sulfooxy-androst-5-en-17-one/DHEAS, and other sulfate conjugates. Mediates the secretion of the riboflavin and biotin vitamins into milk. Extrudes pheophorbide a, a phototoxic porphyrin catabolite of chlorophyll, reducing its bioavailability. Plays an important role in the exclusion of xenobiotics from the brain. It confers to cells a resistance to multiple drugs and other xenobiotics including mitoxantrone, pheophorbide, camptothecin, methotrexate, azidothymidine, and the anthracyclines daunorubicin and doxorubicin, through the control of their efflux. In placenta, it limits the penetration of drugs from the maternal plasma into the fetus. May play a role in early stem cell self-renewal by blocking differentiation. In inflammatory macrophages, exports itaconate from the cytosol to the extracellular compartment and limits the activation of TFEB-dependent lysosome biogenesis involved in antibacterial innate immune response. This chain is Broad substrate specificity ATP-binding cassette transporter ABCG2 (ABCG2), found in Homo sapiens (Human).